Consider the following 108-residue polypeptide: Phosphoribosyl-AMP cyclohydrolase (108 aa).

Asp78 contacts Mg(2+). Cys79 provides a ligand contact to Zn(2+). Residues Asp80 and Asp82 each contribute to the Mg(2+) site. 2 residues coordinate Zn(2+): Cys95 and Cys102.

The protein belongs to the PRA-CH family. In terms of assembly, homodimer. Requires Mg(2+) as cofactor. Zn(2+) serves as cofactor.

It localises to the cytoplasm. The catalysed reaction is 1-(5-phospho-beta-D-ribosyl)-5'-AMP + H2O = 1-(5-phospho-beta-D-ribosyl)-5-[(5-phospho-beta-D-ribosylamino)methylideneamino]imidazole-4-carboxamide. It participates in amino-acid biosynthesis; L-histidine biosynthesis; L-histidine from 5-phospho-alpha-D-ribose 1-diphosphate: step 3/9. Catalyzes the hydrolysis of the adenine ring of phosphoribosyl-AMP. This Nitrosopumilus maritimus (strain SCM1) protein is Phosphoribosyl-AMP cyclohydrolase.